Reading from the N-terminus, the 372-residue chain is Heat-inducible transcription repressor HrcA (372 aa).

A disordered region spans residues 300-334 (YGRSGAAGEPAGNDPVGEPETESETESQTNDTEPI).

It belongs to the HrcA family.

In terms of biological role, negative regulator of class I heat shock genes (grpE-dnaK-dnaJ and groELS operons). Prevents heat-shock induction of these operons. The sequence is that of Heat-inducible transcription repressor HrcA from Bifidobacterium longum (strain NCC 2705).